A 554-amino-acid polypeptide reads, in one-letter code: Urocanate hydratase (554 aa).

NAD(+)-binding positions include 50–51 (GG), Gln-128, 174–176 (GMG), Glu-194, Arg-199, 240–241 (NA), 261–265 (QTSAH), 271–272 (YI), and Tyr-320. Cys-408 is a catalytic residue. Gly-490 contributes to the NAD(+) binding site.

The protein belongs to the urocanase family. It depends on NAD(+) as a cofactor.

It is found in the cytoplasm. It carries out the reaction 4-imidazolone-5-propanoate = trans-urocanate + H2O. Its pathway is amino-acid degradation; L-histidine degradation into L-glutamate; N-formimidoyl-L-glutamate from L-histidine: step 2/3. Its function is as follows. Catalyzes the conversion of urocanate to 4-imidazolone-5-propionate. This Rubrobacter xylanophilus (strain DSM 9941 / JCM 11954 / NBRC 16129 / PRD-1) protein is Urocanate hydratase.